We begin with the raw amino-acid sequence, 653 residues long: Chaperone protein DnaK (653 aa).

Threonine 200 carries the phosphothreonine; by autocatalysis modification. The interval 615–653 (AEAAAAGAAGAGGAGASAGGASQQQDDVVDAEFKEVKKD) is disordered. A compositionally biased stretch (gly residues) spans 623-632 (AGAGGAGASA).

This sequence belongs to the heat shock protein 70 family.

Its function is as follows. Acts as a chaperone. The chain is Chaperone protein DnaK from Paraburkholderia xenovorans (strain LB400).